Here is a 417-residue protein sequence, read N- to C-terminus: Gamma-glutamyl phosphate reductase (417 aa).

The protein belongs to the gamma-glutamyl phosphate reductase family.

It is found in the cytoplasm. The catalysed reaction is L-glutamate 5-semialdehyde + phosphate + NADP(+) = L-glutamyl 5-phosphate + NADPH + H(+). Its pathway is amino-acid biosynthesis; L-proline biosynthesis; L-glutamate 5-semialdehyde from L-glutamate: step 2/2. Functionally, catalyzes the NADPH-dependent reduction of L-glutamate 5-phosphate into L-glutamate 5-semialdehyde and phosphate. The product spontaneously undergoes cyclization to form 1-pyrroline-5-carboxylate. The sequence is that of Gamma-glutamyl phosphate reductase from Bacteroides thetaiotaomicron (strain ATCC 29148 / DSM 2079 / JCM 5827 / CCUG 10774 / NCTC 10582 / VPI-5482 / E50).